Reading from the N-terminus, the 600-residue chain is Translation initiation factor IF-2 (600 aa).

The tr-type G domain maps to 112–279 (ERAPIITVMG…AINLQAEILE (168 aa)). The interval 121–128 (GHVDHGKT) is G1. A GTP-binding site is contributed by 121–128 (GHVDHGKT). Positions 146–150 (GITQH) are G2. The G3 stretch occupies residues 167-170 (DTPG). GTP-binding positions include 167–171 (DTPGH) and 221–224 (NKMD). Residues 221-224 (NKMD) are G4. The tract at residues 257 to 259 (SAL) is G5.

It belongs to the TRAFAC class translation factor GTPase superfamily. Classic translation factor GTPase family. IF-2 subfamily.

The protein resides in the cytoplasm. One of the essential components for the initiation of protein synthesis. Protects formylmethionyl-tRNA from spontaneous hydrolysis and promotes its binding to the 30S ribosomal subunits. Also involved in the hydrolysis of GTP during the formation of the 70S ribosomal complex. This is Translation initiation factor IF-2 from Mycoplasma mobile (strain ATCC 43663 / 163K / NCTC 11711) (Mesomycoplasma mobile).